Reading from the N-terminus, the 316-residue chain is Probable cell division protein WhiA (316 aa).

Residues 275 to 309 constitute a DNA-binding region (H-T-H motif); that stretch reads TLKELGEMVSGGKISKSGINHRLRKIDDIAEKLRA.

This sequence belongs to the WhiA family.

In terms of biological role, involved in cell division and chromosome segregation. The protein is Probable cell division protein WhiA of Bacillus anthracis (strain CDC 684 / NRRL 3495).